A 246-amino-acid polypeptide reads, in one-letter code: Bidirectional sugar transporter SWEET3a (246 aa).

Residues 1–6 (MFPDIR) are Extracellular-facing. A helical transmembrane segment spans residues 7-27 (FIVGIIGSVACMLLYSAPILT). A MtN3/slv 1 domain is found at 7 to 96 (FIVGIIGSVA…ISIYVWFAPR (90 aa)). The Cytoplasmic segment spans residues 28 to 42 (FKRVIKKASVEEFSC). The helical transmembrane segment at 43–63 (IPYILALFSCLTYSWYGFPVV) threads the bilayer. Topologically, residues 64 to 74 (SYGWENMTVCS) are extracellular. N69 carries an N-linked (GlcNAc...) asparagine glycan. Residues 75–95 (ISSLGVLFEGTFISIYVWFAP) form a helical membrane-spanning segment. The Cytoplasmic portion of the chain corresponds to 96-101 (RGKKKQ). A helical transmembrane segment spans residues 102–122 (VMLMASLILAVFCMTVFFSSF). The Extracellular segment spans residues 123–131 (SIHNHHIRK). A helical transmembrane segment spans residues 132–152 (VFVGSVGLVSSISMYGSPLVA). In terms of domain architecture, MtN3/slv 2 spans 133–217 (FVGSVGLVSS…VVYCIYSKCK (85 aa)). Residues 153 to 166 (MKQVIRTKSVEFMP) are Cytoplasmic-facing. Residues 167–187 (FYLSLFTLFTSLTWMAYGVIG) form a helical membrane-spanning segment. Over 188–191 (RDPF) the chain is Extracellular. A helical membrane pass occupies residues 192–212 (IATPNCIGSIMGILQLVVYCI). Residues 213-246 (YSKCKEAPKVLHDIEQANVVKIPTSHVDTKGHNP) lie on the Cytoplasmic side of the membrane.

It belongs to the SWEET sugar transporter family. As to quaternary structure, forms homooligomers and/or heterooligomers.

The protein resides in the cell membrane. In terms of biological role, mediates both low-affinity uptake and efflux of sugar across the plasma membrane. This is Bidirectional sugar transporter SWEET3a (SWEET3A) from Oryza sativa subsp. japonica (Rice).